Reading from the N-terminus, the 422-residue chain is L-2-hydroxyglutarate dehydrogenase (422 aa).

It belongs to the L2HGDH family. The cofactor is FAD.

The protein resides in the cell inner membrane. The catalysed reaction is (S)-2-hydroxyglutarate + a quinone = a quinol + 2-oxoglutarate. Its pathway is amino-acid degradation. Catalyzes the dehydrogenation of L-2-hydroxyglutarate (L2HG) to alpha-ketoglutarate and couples to the respiratory chain by feeding electrons from the reaction into the membrane quinone pool. Functions in a L-lysine degradation pathway that proceeds via cadaverine, glutarate and L-2-hydroxyglutarate. This is L-2-hydroxyglutarate dehydrogenase from Escherichia coli (strain K12).